A 686-amino-acid chain; its full sequence is X-linked interleukin-1 receptor accessory protein-like 2 (686 aa).

The N-terminal stretch at 1–16 (MKPPFLLALVVCSVVS) is a signal peptide. Residues 17 to 354 (TNLKMVSKRN…LLRKKDLIYK (338 aa)) lie on the Extracellular side of the membrane. Residues 18-132 (NLKMVSKRNS…YCMKVSMSLT (115 aa)) form the Ig-like C2-type 1 domain. Cys53 and Cys116 form a disulfide bridge. N-linked (GlcNAc...) asparagine glycans are attached at residues Asn63, Asn120, Asn136, Asn211, and Asn328. 2 consecutive Ig-like C2-type domains span residues 141–232 (CYNS…LKVT) and 239–347 (PPKP…VLLR). 2 cysteine pairs are disulfide-bonded: Cys162/Cys214 and Cys265/Cys331. Residues 355-375 (IELAGGLGAIFLLLVLLVVIY) traverse the membrane as a helical segment. Topologically, residues 376–686 (KCYNIELMLF…KELSFTSDIW (311 aa)) are cytoplasmic. A TIR domain is found at 400–556 (KEYDAYLSYT…KFWKHLVYEM (157 aa)). Glu488 is an active-site residue.

Belongs to the interleukin-1 receptor family. As to expression, detected at low levels in fetal and adult brain, in particular in the frontal lobe, temporal lobe and cerebellum. Detected at very low levels in skin, liver, fetal ovary and in placenta.

Its subcellular location is the membrane. The catalysed reaction is NAD(+) + H2O = ADP-D-ribose + nicotinamide + H(+). The sequence is that of X-linked interleukin-1 receptor accessory protein-like 2 (IL1RAPL2) from Homo sapiens (Human).